We begin with the raw amino-acid sequence, 754 residues long: RNA exonuclease 5 (754 aa).

A disordered region spans residues 1–36 (MELEEEENPRKRKETPNSALTTELDRPSWDVQDPEP). In terms of domain architecture, Exonuclease spans 222 to 370 (LFGLDCEVCL…EDARTALELV (149 aa)). RRM domains follow at residues 488-562 (STIY…RLLT) and 583-662 (GTIY…RHLQ).

This chain is RNA exonuclease 5 (Rexo5), found in Rattus norvegicus (Rat).